A 396-amino-acid polypeptide reads, in one-letter code: Elongation factor Tu 2 (396 aa).

The tr-type G domain occupies 10–206 (KPHINVGTIG…AMDAHIPQPE (197 aa)). Residues 19–26 (GHVDHGKT) are G1. 19-26 (GHVDHGKT) contacts GTP. Threonine 26 lines the Mg(2+) pocket. The segment at 60–64 (GITIA) is G2. The G3 stretch occupies residues 81 to 84 (DCPG). GTP is bound by residues 81 to 85 (DCPGH) and 136 to 139 (NKAD). Residues 136 to 139 (NKAD) are G4. Positions 174–176 (SAL) are G5.

The protein belongs to the TRAFAC class translation factor GTPase superfamily. Classic translation factor GTPase family. EF-Tu/EF-1A subfamily. Monomer.

Its subcellular location is the cytoplasm. It carries out the reaction GTP + H2O = GDP + phosphate + H(+). GTP hydrolase that promotes the GTP-dependent binding of aminoacyl-tRNA to the A-site of ribosomes during protein biosynthesis. The polypeptide is Elongation factor Tu 2 (Halorhodospira halophila (strain DSM 244 / SL1) (Ectothiorhodospira halophila (strain DSM 244 / SL1))).